We begin with the raw amino-acid sequence, 660 residues long: Zeaxanthin epoxidase, chloroplastic (660 aa).

A chloroplast-targeting transit peptide spans 1 to 49 (MYASSARDGIPGKWCNARRKQLPLLISKDFPAELYHSLPCKSLENGHIK). Residues 79-107 (KVLV…LVFE) and 357-370 (TFSW…LLGD) each bind FAD. Residues 545 to 609 (LVLSRDENMP…HGTWFIDNEG (65 aa)) form the FHA domain.

FAD is required as a cofactor.

The protein resides in the plastid. It is found in the chloroplast membrane. Its subcellular location is the chloroplast thylakoid membrane. The catalysed reaction is all-trans-zeaxanthin + 4 reduced [2Fe-2S]-[ferredoxin] + 2 O2 + 4 H(+) = all-trans-violaxanthin + 4 oxidized [2Fe-2S]-[ferredoxin] + 2 H2O. It carries out the reaction all-trans-zeaxanthin + 2 reduced [2Fe-2S]-[ferredoxin] + O2 + 2 H(+) = all-trans-antheraxanthin + 2 oxidized [2Fe-2S]-[ferredoxin] + H2O. It catalyses the reaction all-trans-antheraxanthin + 2 reduced [2Fe-2S]-[ferredoxin] + O2 + 2 H(+) = all-trans-violaxanthin + 2 oxidized [2Fe-2S]-[ferredoxin] + H2O. The enzyme catalyses beta-cryptoxanthin + 2 reduced [2Fe-2S]-[ferredoxin] + O2 + 2 H(+) = (5R,6S)-5,6-epoxi-beta-cryptoxanthin + 2 oxidized [2Fe-2S]-[ferredoxin] + H2O. The protein operates within plant hormone biosynthesis; abscisate biosynthesis. Converts zeaxanthin into antheraxanthin and subsequently violaxanthin. Also acts on beta-cryptoxanthin. Involved in the epoxidation of zeaxanthin. This chain is Zeaxanthin epoxidase, chloroplastic, found in Capsicum annuum (Capsicum pepper).